A 511-amino-acid chain; its full sequence is 4,4'-diapophytoene desaturase (4,4'-diapolycopene-forming) (511 aa).

It belongs to the carotenoid/retinoid oxidoreductase family.

The catalysed reaction is 15-cis-4,4'-diapophytoene + 4 FAD + 4 H(+) = all-trans-4,4'-diapolycopene + 4 FADH2. It participates in carotenoid biosynthesis. Involved in the biosynthesis of C30 carotenoids. Catalyzes four successive dehydrogenation reactions that lead to the introduction of four double bonds into 4,4'-diapophytoene (dehydrosqualene) to yield 4,4'-diapolycopene. This is 4,4'-diapophytoene desaturase (4,4'-diapolycopene-forming) from Methylomonas sp.